Consider the following 2202-residue polypeptide: Activating signal cointegrator 1 complex subunit 3 (2202 aa).

Residues 1 to 400 (MALPRLTGAL…RQRDADVEKI (400 aa)) are required for interaction with ASCC2. At serine 12 the chain carries Phosphoserine. Coiled-coil stretches lie at residues 18-79 (KQDN…AAKQ) and 328-356 (IQSE…KAGE). The Helicase ATP-binding 1 domain occupies 486–669 (ETAYNTNENM…FLHVNPYIGL (184 aa)). Residue 499–506 (APTGAGKT) participates in ATP binding. Lysine 572 carries the post-translational modification N6-acetyllysine. The short motif at 611-614 (DEVH) is the DEVH box element. The Helicase C-terminal 1 domain occupies 728–914 (TVRTAMSLIE…GTVTNVEEAV (187 aa)). One can recognise an SEC63 1 domain in the interval 978-1287 (STDLGRTASH…GAEAVCIINF (310 aa)). The Helicase ATP-binding 2 domain maps to 1336-1511 (HTLYHTDCNV…WLNIKQMGLF (176 aa)). Residue 1349-1356 (APTGSGKT) participates in ATP binding. Residues 1453-1456 (DEIH) carry the DEIH box motif. The Helicase C-terminal 2 domain occupies 1544-1739 (PAFQAIRSHS…VLSDHLNAEI (196 aa)). Positions 1812–2176 (PLTYGRIASY…LGLDQQYDIY (365 aa)) constitute an SEC63 2 domain. The residue at position 2195 (serine 2195) is a Phosphoserine.

It belongs to the helicase family. Identified in the ASCC complex that contains ASCC1, ASCC2 and ASCC3. Functions as scaffolding subunit that interacts directly with both ASCC1 and ASCC2. Interacts directly with ALKBH3, and thereby recruits ALKBH3 to the ASCC complex. Part of the ASC-1/TRIP4 complex, that contains TRIP4, ASCC1, ASCC2 and ASCC3. Part of the RQT (ribosome quality control trigger) complex, that contains ASCC2, ASCC3 and TRIP4. Associates with ribosomes; recruited to collided ribosomes. Interacts with ZCCHC4. Interacts with ZNF598. Interacts with RPS3. Ubiquitous.

Its subcellular location is the nucleus. It is found in the nucleus speckle. It localises to the cytoplasm. The protein resides in the cytosol. The enzyme catalyses Couples ATP hydrolysis with the unwinding of duplex DNA by translocating in the 3'-5' direction.. It carries out the reaction ATP + H2O = ADP + phosphate + H(+). Its function is as follows. ATPase involved both in DNA repair and rescue of stalled ribosomes. 3'-5' DNA helicase involved in repair of alkylated DNA: promotes DNA unwinding to generate single-stranded substrate needed for ALKBH3, enabling ALKBH3 to process alkylated N3-methylcytosine (3mC) within double-stranded regions. Also involved in activation of the ribosome quality control (RQC) pathway, a pathway that degrades nascent peptide chains during problematic translation. Drives the splitting of stalled ribosomes that are ubiquitinated in a ZNF598-dependent manner, as part of the ribosome quality control trigger (RQT) complex. Part of the ASC-1 complex that enhances NF-kappa-B, SRF and AP1 transactivation. The protein is Activating signal cointegrator 1 complex subunit 3 (ASCC3) of Homo sapiens (Human).